We begin with the raw amino-acid sequence, 125 residues long: Small ribosomal subunit protein eS8 (125 aa).

The protein belongs to the eukaryotic ribosomal protein eS8 family. As to quaternary structure, part of the 30S ribosomal subunit.

This Methanocorpusculum labreanum (strain ATCC 43576 / DSM 4855 / Z) protein is Small ribosomal subunit protein eS8.